We begin with the raw amino-acid sequence, 148 residues long: Nucleoside diphosphate kinase 1 (148 aa).

ATP-binding residues include K9, F57, R85, T91, R102, and N112. Residue H115 is the Pros-phosphohistidine intermediate of the active site.

It belongs to the NDK family. Requires Mg(2+) as cofactor. Post-translationally, the N-terminus is blocked.

It catalyses the reaction a 2'-deoxyribonucleoside 5'-diphosphate + ATP = a 2'-deoxyribonucleoside 5'-triphosphate + ADP. The catalysed reaction is a ribonucleoside 5'-diphosphate + ATP = a ribonucleoside 5'-triphosphate + ADP. In terms of biological role, major role in the synthesis of nucleoside triphosphates other than ATP. The ATP gamma phosphate is transferred to the NDP beta phosphate via a ping-pong mechanism, using a phosphorylated active-site intermediate. The sequence is that of Nucleoside diphosphate kinase 1 (NDPK1) from Spinacia oleracea (Spinach).